A 215-amino-acid chain; its full sequence is 2-phospho-L-lactate guanylyltransferase (215 aa).

The protein belongs to the CofC family. Homodimer.

The enzyme catalyses (2S)-2-phospholactate + GTP + H(+) = (2S)-lactyl-2-diphospho-5'-guanosine + diphosphate. It functions in the pathway cofactor biosynthesis; coenzyme F420 biosynthesis. Guanylyltransferase that catalyzes the activation of (2S)-2-phospholactate (2-PL) as (2S)-lactyl-2-diphospho-5'-guanosine, via the condensation of 2-PL with GTP. It is involved in the biosynthesis of coenzyme F420, a hydride carrier cofactor. This chain is 2-phospho-L-lactate guanylyltransferase, found in Methanoculleus marisnigri (strain ATCC 35101 / DSM 1498 / JR1).